A 279-amino-acid polypeptide reads, in one-letter code: Large ribosomal subunit protein uL2 (279 aa).

2 disordered regions span residues 34 to 58 and 225 to 279; these read LRPLHKTGGRNNTGRITTRHKGGGH and VMNP…KNKR. The span at 251–268 shows a compositional bias: basic and acidic residues; it reads GKPEGRTRRPNKESDKLI. Residues 269 to 279 are compositionally biased toward basic residues; that stretch reads VRRRRTGKNKR.

It belongs to the universal ribosomal protein uL2 family. As to quaternary structure, part of the 50S ribosomal subunit. Forms a bridge to the 30S subunit in the 70S ribosome.

Functionally, one of the primary rRNA binding proteins. Required for association of the 30S and 50S subunits to form the 70S ribosome, for tRNA binding and peptide bond formation. It has been suggested to have peptidyltransferase activity; this is somewhat controversial. Makes several contacts with the 16S rRNA in the 70S ribosome. The chain is Large ribosomal subunit protein uL2 from Micrococcus luteus (strain ATCC 4698 / DSM 20030 / JCM 1464 / CCM 169 / CCUG 5858 / IAM 1056 / NBRC 3333 / NCIMB 9278 / NCTC 2665 / VKM Ac-2230) (Micrococcus lysodeikticus).